Here is a 439-residue protein sequence, read N- to C-terminus: Glucose-1-phosphate adenylyltransferase (439 aa).

Residues Gly172, 187–188, and Ser219 contribute to the alpha-D-glucose 1-phosphate site; that span reads EK.

It belongs to the bacterial/plant glucose-1-phosphate adenylyltransferase family. In terms of assembly, homotetramer.

It catalyses the reaction alpha-D-glucose 1-phosphate + ATP + H(+) = ADP-alpha-D-glucose + diphosphate. It participates in glycan biosynthesis; glycogen biosynthesis. In terms of biological role, involved in the biosynthesis of ADP-glucose, a building block required for the elongation reactions to produce glycogen. Catalyzes the reaction between ATP and alpha-D-glucose 1-phosphate (G1P) to produce pyrophosphate and ADP-Glc. The protein is Glucose-1-phosphate adenylyltransferase of Synechocystis sp. (strain ATCC 27184 / PCC 6803 / Kazusa).